The sequence spans 149 residues: Calmodulin (149 aa).

Ala-2 carries the N-acetylalanine modification. 4 consecutive EF-hand domains span residues 8–43 (EQVS…LGQN), 44–79 (PSES…KMKD), 81–116 (DSEE…IGEK), and 117–149 (LTDD…MMQK). Residues Asp-21, Asp-23, Asp-25, Gln-27, Glu-32, Asp-57, Asp-59, Asn-61, Thr-63, Glu-68, Asp-94, Asp-96, Asn-98, Glu-105, Asp-130, Asp-132, Asp-134, Arg-136, and Glu-141 each contribute to the Ca(2+) site.

Belongs to the calmodulin family.

Calmodulin mediates the control of a large number of enzymes, ion channels and other proteins by Ca(2+). Among the enzymes to be stimulated by the calmodulin-Ca(2+) complex are a number of protein kinases and phosphatases. The protein is Calmodulin (camA) of Emericella nidulans (strain FGSC A4 / ATCC 38163 / CBS 112.46 / NRRL 194 / M139) (Aspergillus nidulans).